The chain runs to 120 residues: Large ribosomal subunit protein bL19 (120 aa).

This sequence belongs to the bacterial ribosomal protein bL19 family.

Functionally, this protein is located at the 30S-50S ribosomal subunit interface and may play a role in the structure and function of the aminoacyl-tRNA binding site. The chain is Large ribosomal subunit protein bL19 from Picosynechococcus sp. (strain ATCC 27264 / PCC 7002 / PR-6) (Agmenellum quadruplicatum).